We begin with the raw amino-acid sequence, 528 residues long: Linear element-associated protein hop1 (528 aa).

In terms of domain architecture, HORMA spans 11 to 212 (TKSDFTLKNL…RGEFKDIVSF (202 aa)). The PHD-type zinc-finger motif lies at 334 to 385 (LLNCECGDSTEDSEMFQCERCDGWVHCACYGFESDSDPRQPNQLLCYTCLLV). Zn(2+) is bound by residues C337, C339, C351, C354, H359, C362, C379, and C382. Residues 507–528 (RPKKVSKTSNTKETDTMKPLRI) are disordered. Positions 516-528 (NTKETDTMKPLRI) are enriched in basic and acidic residues.

As to quaternary structure, interacts (via N-terminus) with rec10; the interaction is direct. Interacts (via C-terminus) with rec15 (via C-terminus); the interaction is direct.

It is found in the nucleus. The protein resides in the chromosome. Functionally, facilitates initiation of meiotic recombination and DNA double-strand break (DSB) formation at DSB hotspot sites by enhancing the interaction between rec10 and rec15. This is Linear element-associated protein hop1 from Schizosaccharomyces pombe (strain 972 / ATCC 24843) (Fission yeast).